Here is a 291-residue protein sequence, read N- to C-terminus: Probable protein S-acyltransferase 12 (291 aa).

2 helical membrane-spanning segments follow: residues Gly-14–Val-34 and Leu-49–Trp-69. The 51-residue stretch at Gly-111–Phe-161 folds into the DHHC domain. The S-palmitoyl cysteine intermediate role is filled by Cys-141. The next 2 helical transmembrane spans lie at Phe-155–Leu-175 and Leu-198–Met-218.

The protein belongs to the DHHC palmitoyltransferase family.

The protein localises to the cell membrane. The enzyme catalyses L-cysteinyl-[protein] + hexadecanoyl-CoA = S-hexadecanoyl-L-cysteinyl-[protein] + CoA. Its function is as follows. Palmitoyl acyltransferase. This is Probable protein S-acyltransferase 12 (PAT12) from Arabidopsis thaliana (Mouse-ear cress).